A 185-amino-acid polypeptide reads, in one-letter code: Elongation factor P 1 (185 aa).

This sequence belongs to the elongation factor P family.

The protein localises to the cytoplasm. The protein operates within protein biosynthesis; polypeptide chain elongation. Functionally, involved in peptide bond synthesis. Stimulates efficient translation and peptide-bond synthesis on native or reconstituted 70S ribosomes in vitro. Probably functions indirectly by altering the affinity of the ribosome for aminoacyl-tRNA, thus increasing their reactivity as acceptors for peptidyl transferase. The protein is Elongation factor P 1 (efp1) of Chlamydia pneumoniae (Chlamydophila pneumoniae).